The chain runs to 114 residues: T cell receptor beta variable 28 (114 aa).

The signal sequence occupies residues 1–26 (MGIRLLCRVAFCFLAVGLVDVKVTQS). The Ig-like domain occupies 27–114 (SRYLVKRTGE…TSMYLCASSL (88 aa)). Cys-42 and Cys-110 are disulfide-bonded. Asn-103 is a glycosylation site (N-linked (GlcNAc...) asparagine).

Alpha-beta TR is a heterodimer composed of an alpha and beta chain; disulfide-linked. The alpha-beta TR is associated with the transmembrane signaling CD3 coreceptor proteins to form the TR-CD3 (TcR or TCR). The assembly of alpha-beta TR heterodimers with CD3 occurs in the endoplasmic reticulum where a single alpha-beta TR heterodimer associates with one CD3D-CD3E heterodimer, one CD3G-CD3E heterodimer and one CD247 homodimer forming a stable octameric structure. CD3D-CD3E and CD3G-CD3E heterodimers preferentially associate with TR alpha and TR beta chains, respectively. The association of the CD247 homodimer is the last step of TcR assembly in the endoplasmic reticulum and is required for transport to the cell surface.

The protein localises to the cell membrane. Functionally, v region of the variable domain of T cell receptor (TR) beta chain that participates in the antigen recognition. Alpha-beta T cell receptors are antigen specific receptors which are essential to the immune response and are present on the cell surface of T lymphocytes. Recognize peptide-major histocompatibility (MH) (pMH) complexes that are displayed by antigen presenting cells (APC), a prerequisite for efficient T cell adaptive immunity against pathogens. Binding of alpha-beta TR to pMH complex initiates TR-CD3 clustering on the cell surface and intracellular activation of LCK that phosphorylates the ITAM motifs of CD3G, CD3D, CD3E and CD247 enabling the recruitment of ZAP70. In turn ZAP70 phosphorylates LAT, which recruits numerous signaling molecules to form the LAT signalosome. The LAT signalosome propagates signal branching to three major signaling pathways, the calcium, the mitogen-activated protein kinase (MAPK) kinase and the nuclear factor NF-kappa-B (NF-kB) pathways, leading to the mobilization of transcription factors that are critical for gene expression and essential for T cell growth and differentiation. The T cell repertoire is generated in the thymus, by V-(D)-J rearrangement. This repertoire is then shaped by intrathymic selection events to generate a peripheral T cell pool of self-MH restricted, non-autoaggressive T cells. Post-thymic interaction of alpha-beta TR with the pMH complexes shapes TR structural and functional avidity. This is T cell receptor beta variable 28 from Homo sapiens (Human).